Here is a 758-residue protein sequence, read N- to C-terminus: 5-methyltetrahydropteroyltriglutamate--homocysteine methyltransferase (758 aa).

5-methyltetrahydropteroyltri-L-glutamate is bound by residues 17–20 (RELK) and lysine 117. L-homocysteine-binding positions include 434–436 (IGS) and glutamate 487. L-methionine-binding positions include 434–436 (IGS) and glutamate 487. 5-methyltetrahydropteroyltri-L-glutamate is bound by residues 518 to 519 (RC) and tryptophan 564. Aspartate 602 lines the L-homocysteine pocket. L-methionine is bound at residue aspartate 602. Glutamate 608 is a binding site for 5-methyltetrahydropteroyltri-L-glutamate. Positions 644, 646, and 668 each coordinate Zn(2+). The Proton donor role is filled by histidine 697. Residue cysteine 729 participates in Zn(2+) binding.

The protein belongs to the vitamin-B12 independent methionine synthase family. The cofactor is Zn(2+).

It catalyses the reaction 5-methyltetrahydropteroyltri-L-glutamate + L-homocysteine = tetrahydropteroyltri-L-glutamate + L-methionine. It participates in amino-acid biosynthesis; L-methionine biosynthesis via de novo pathway; L-methionine from L-homocysteine (MetE route): step 1/1. Functionally, catalyzes the transfer of a methyl group from 5-methyltetrahydrofolate to homocysteine resulting in methionine formation. This chain is 5-methyltetrahydropteroyltriglutamate--homocysteine methyltransferase, found in Yersinia pseudotuberculosis serotype I (strain IP32953).